The sequence spans 201 residues: Small ribosomal subunit protein uS4c (201 aa).

Positions 15–43 (LGALPGLTSKRPSPGSDLRNQSRSGKRSQ) are disordered. The S4 RNA-binding domain occupies 89-150 (MRLDNILFRL…EQRSRALIQK (62 aa)).

This sequence belongs to the universal ribosomal protein uS4 family. As to quaternary structure, part of the 30S ribosomal subunit. Contacts protein S5. The interaction surface between S4 and S5 is involved in control of translational fidelity.

Its subcellular location is the plastid. The protein localises to the chloroplast. In terms of biological role, one of the primary rRNA binding proteins, it binds directly to 16S rRNA where it nucleates assembly of the body of the 30S subunit. Functionally, with S5 and S12 plays an important role in translational accuracy. This is Small ribosomal subunit protein uS4c (rps4) from Ceratophyllum demersum (Rigid hornwort).